Reading from the N-terminus, the 84-residue chain is Small ribosomal subunit protein uS17 (84 aa).

Belongs to the universal ribosomal protein uS17 family. Part of the 30S ribosomal subunit.

Functionally, one of the primary rRNA binding proteins, it binds specifically to the 5'-end of 16S ribosomal RNA. The sequence is that of Small ribosomal subunit protein uS17 from Proteus mirabilis (strain HI4320).